A 466-amino-acid chain; its full sequence is Gastric inhibitory polypeptide receptor (466 aa).

A signal peptide spans 1–21; the sequence is MTTSPILQLLLRLSLCGLLLQ. The Extracellular segment spans residues 22–138; it reads RAETGSKGQT…DQRLILERLQ (117 aa). Cystine bridges form between Cys-46–Cys-70, Cys-61–Cys-103, and Cys-84–Cys-118. N-linked (GlcNAc...) asparagine glycans are attached at residues Asn-62 and Asn-77. A helical membrane pass occupies residues 139-161; sequence VMYTVGYSLSLATLLLALLILSL. At 162–169 the chain is on the cytoplasmic side; the sequence is FRRLHCTR. Residues 170–189 traverse the membrane as a helical segment; that stretch reads NYIHINLFTSFMLRAAAILS. At 190 to 217 the chain is on the extracellular side; that stretch reads RDRLLPRPGPYLGDQALALWNQALAACR. A helical membrane pass occupies residues 218 to 242; that stretch reads TAQIVTQYCVGANYTWLLVEGVYLH. The Cytoplasmic portion of the chain corresponds to 243 to 254; the sequence is SLLVLVGGSEEG. The helical transmembrane segment at 255–278 threads the bilayer; sequence HFRYYLLLGWGAPALFVIPWVIVR. Residues 279–293 lie on the Extracellular side of the membrane; the sequence is YLYENTQCWERNEVK. The helical transmembrane segment at 294–319 threads the bilayer; that stretch reads AIWWIIRTPILMTILINFLIFIRILG. Residues 320 to 341 lie on the Cytoplasmic side of the membrane; the sequence is ILLSKLRTRQMRCRDYRLRLAR. The helical transmembrane segment at 342–362 threads the bilayer; sequence STLTLVPLLGVHEVVFAPVTE. At 363–377 the chain is on the extracellular side; that stretch reads EQARGALRFAKLGFE. The helical transmembrane segment at 378–398 threads the bilayer; sequence IFLSSFQGFLVSVLYCFINKE. Residues 399-466 lie on the Cytoplasmic side of the membrane; the sequence is VQSEIRRGWH…EASRELESYC (68 aa). Residues 427–466 are disordered; sequence AFRALPSGSGPGEVPTSRGLSSGTLPGPGNEASRELESYC.

This sequence belongs to the G-protein coupled receptor 2 family. In terms of assembly, may form homodimers and heterodimers with GLP1R. Post-translationally, N-glycosylation is required for cell surface expression and lengthens receptor half-life by preventing degradation in the ER.

It is found in the cell membrane. Its function is as follows. This is a receptor for GIP. The activity of this receptor is mediated by G proteins which activate adenylyl cyclase. This is Gastric inhibitory polypeptide receptor (GIPR) from Homo sapiens (Human).